Consider the following 162-residue polypeptide: Anaerobic nitrite reductase (162 aa).

N-acetylserine is present on serine 2. One can recognise a Globin domain in the interval 9-158; it reads VFTEEQEALV…LVAAIKFEMK (150 aa). The Homodimerization signature appears at 42–46; that stretch reads EIAPS. The heme b site is built by serine 52, lysine 66, histidine 70, arginine 100, and histidine 105. The Homodimerization signature appears at 112 to 124; the sequence is NEHFEVTRFALLE.

Belongs to the plant globin family. Homodimer with distinct heme coordination in each subunits. Heme b serves as cofactor. As to expression, root nodules.

It localises to the cytoplasm. The protein localises to the nucleus. It catalyses the reaction Fe(III)-heme b-[protein] + nitric oxide + H2O = Fe(II)-heme b-[protein] + nitrite + 2 H(+). In terms of biological role, phytoglobin that reduces nitrite to nitric oxide (NO) under anoxic conditions (e.g. during flooding or in waterlogged soil) and upon root nodulation. Required for general plant development and during nodulation, especially for the onset of symbiosis. Monitors nitric oxide (NO) levels during early phase of the nitrogen-fixing symbiosis and buffers oxygen in functioning nodules. May not function as an oxygen storage or transport protein. Has an unusually high affinity for O(2) through a hexacoordinate heme iron because of a very low dissociation constant. This Parasponia andersonii (Sponia andersonii) protein is Anaerobic nitrite reductase.